Here is a 245-residue protein sequence, read N- to C-terminus: Tetraspanin-6 (245 aa).

At 1 to 19 (MASPSRRLQTKPVITCLKS) the chain is on the cytoplasmic side. Residues 20-40 (VLLIYTFIFWITGVILLAVGI) traverse the membrane as a helical segment. Residues 41–59 (WGKVSLENYFSLLNEKATN) lie on the Extracellular side of the membrane. A helical membrane pass occupies residues 60 to 80 (VPFVLIGTGTVIILLGTFGCF). Residues 81–93 (ATCRTSAWMLKLY) are Cytoplasmic-facing. A helical membrane pass occupies residues 94–114 (AMFLTLIFLVELVAAIVGFVF). Over 115–208 (RHEIKNSFKS…IKVMTTIESE (94 aa)) the chain is Extracellular. Asparagine 134 carries N-linked (GlcNAc...) asparagine glycosylation. The helical transmembrane segment at 209 to 229 (MGVVAGISFGVACFQLIGIFL) threads the bilayer. Residues 230–245 (AYCLSRAITNNQYEIV) lie on the Cytoplasmic side of the membrane.

The protein belongs to the tetraspanin (TM4SF) family.

The protein localises to the membrane. This Mus musculus (Mouse) protein is Tetraspanin-6 (Tspan6).